Reading from the N-terminus, the 200-residue chain is 3-isopropylmalate dehydratase small subunit (200 aa).

This sequence belongs to the LeuD family. LeuD type 1 subfamily. In terms of assembly, heterodimer of LeuC and LeuD.

The enzyme catalyses (2R,3S)-3-isopropylmalate = (2S)-2-isopropylmalate. It functions in the pathway amino-acid biosynthesis; L-leucine biosynthesis; L-leucine from 3-methyl-2-oxobutanoate: step 2/4. Catalyzes the isomerization between 2-isopropylmalate and 3-isopropylmalate, via the formation of 2-isopropylmaleate. The sequence is that of 3-isopropylmalate dehydratase small subunit from Yersinia pseudotuberculosis serotype O:1b (strain IP 31758).